Consider the following 334-residue polypeptide: Protein-methionine-sulfoxide reductase catalytic subunit MsrP (334 aa).

The segment at residues 1–44 (MKKKQFLKESDVTAESVFFMKRRQVLKALGISAAALSLPHAAHA) is a signal peptide (tat-type signal). Residues Asn88, 91–92 (YE), Cys146, Thr181, Asn233, Arg238, and 249–251 (GIK) contribute to the Mo-molybdopterin site.

Belongs to the MsrP family. Heterodimer of a catalytic subunit (MsrP) and a heme-binding subunit (MsrQ). The cofactor is Mo-molybdopterin. In terms of processing, predicted to be exported by the Tat system. The position of the signal peptide cleavage has not been experimentally proven.

The protein localises to the periplasm. The catalysed reaction is L-methionyl-[protein] + a quinone + H2O = L-methionyl-(S)-S-oxide-[protein] + a quinol. The enzyme catalyses L-methionyl-[protein] + a quinone + H2O = L-methionyl-(R)-S-oxide-[protein] + a quinol. In terms of biological role, part of the MsrPQ system that repairs oxidized periplasmic proteins containing methionine sulfoxide residues (Met-O), using respiratory chain electrons. Thus protects these proteins from oxidative-stress damage caused by reactive species of oxygen and chlorine generated by the host defense mechanisms. MsrPQ is essential for the maintenance of envelope integrity under bleach stress, rescuing a wide series of structurally unrelated periplasmic proteins from methionine oxidation, including the primary periplasmic chaperone SurA and the lipoprotein Pal. The catalytic subunit MsrP is non-stereospecific, being able to reduce both (R-) and (S-) diastereoisomers of methionine sulfoxide. The polypeptide is Protein-methionine-sulfoxide reductase catalytic subunit MsrP (Escherichia coli O139:H28 (strain E24377A / ETEC)).